The following is a 248-amino-acid chain: MKLKIFTKNSPDAIEFSKYVKNLAENLGFKITENDPDVVLVIGGDGTLLRAVKDGIPILGVKFGRRSALLDIRPENIKEALELLQKNKYTIEEYPMLEAKSKNINTIAFNEIAILFNNPETVYGSVNIKERKILFEGDGVLIATPQGSWAWSYSATRVLLHKDINGIEITFINPIIPNIKALIIPQTETILVKLEDKGRTQNVRVISDGEIVGNLISKEDEELTITLSKRKAKILRFFNLIEFDGLFT.

Aspartate 45 acts as the Proton acceptor in catalysis. Residues 45 to 46 (DG), arginine 50, 110 to 111 (NE), and aspartate 138 each bind NAD(+).

This sequence belongs to the NAD kinase family. Requires a divalent metal cation as cofactor.

Its subcellular location is the cytoplasm. It catalyses the reaction NAD(+) + ATP = ADP + NADP(+) + H(+). Involved in the regulation of the intracellular balance of NAD and NADP, and is a key enzyme in the biosynthesis of NADP. Catalyzes specifically the phosphorylation on 2'-hydroxyl of the adenosine moiety of NAD to yield NADP. This is NAD kinase from Sulfurisphaera tokodaii (strain DSM 16993 / JCM 10545 / NBRC 100140 / 7) (Sulfolobus tokodaii).